The following is a 426-amino-acid chain: Serine--tRNA ligase (426 aa).

L-serine is bound at residue 233-235 (TAE). 264 to 266 (RSE) provides a ligand contact to ATP. L-serine is bound at residue glutamate 287. 351 to 354 (EISS) is a binding site for ATP. Serine 387 contacts L-serine.

The protein belongs to the class-II aminoacyl-tRNA synthetase family. Type-1 seryl-tRNA synthetase subfamily. In terms of assembly, homodimer. The tRNA molecule binds across the dimer.

Its subcellular location is the cytoplasm. The catalysed reaction is tRNA(Ser) + L-serine + ATP = L-seryl-tRNA(Ser) + AMP + diphosphate + H(+). It carries out the reaction tRNA(Sec) + L-serine + ATP = L-seryl-tRNA(Sec) + AMP + diphosphate + H(+). It functions in the pathway aminoacyl-tRNA biosynthesis; selenocysteinyl-tRNA(Sec) biosynthesis; L-seryl-tRNA(Sec) from L-serine and tRNA(Sec): step 1/1. In terms of biological role, catalyzes the attachment of serine to tRNA(Ser). Is also able to aminoacylate tRNA(Sec) with serine, to form the misacylated tRNA L-seryl-tRNA(Sec), which will be further converted into selenocysteinyl-tRNA(Sec). This chain is Serine--tRNA ligase, found in Clostridium botulinum (strain Hall / ATCC 3502 / NCTC 13319 / Type A).